The primary structure comprises 316 residues: Bifunctional peptidase and (3S)-lysyl hydroxylase JMJD7 (316 aa).

Position 19 is a cysteine sulfenic acid (-SOH) (Cys19). The 2-oxoglutarate site is built by Tyr123 and Thr172. Tyr123 is a succinate binding site. The JmjC domain occupies 124 to 310 (IQKQNSNLSV…YCYYRMLEQM (187 aa)). Fe cation contacts are provided by His175 and Asp177. Residues Asn181, Tyr183, and Lys190 each coordinate 2-oxoglutarate. Succinate-binding residues include Tyr183 and Lys190. Residue His278 coordinates Fe cation. Residue Trp292 coordinates 2-oxoglutarate.

Homodimer; disulfide-linked. Fe(2+) serves as cofactor. In terms of tissue distribution, expressed in the pars intercerebralis and fan-shaped body, regions known to be involved in sleep.

Its subcellular location is the nucleus. The protein localises to the cytoplasm. The catalysed reaction is L-lysyl-[protein] + 2-oxoglutarate + O2 = (3S)-3-hydroxy-L-lysyl-[protein] + succinate + CO2. In terms of biological role, bifunctional enzyme that acts both as an endopeptidase and 2-oxoglutarate-dependent monooxygenase. Endopeptidase that cleaves histones N-terminal tails at the carboxyl side of methylated arginine or lysine residues, to generate 'tailless nucleosomes', which may trigger transcription elongation. Hydroxylates the guanylate binding protein 128up. May be involved in regulation of behavior and circadian rhythms. This is Bifunctional peptidase and (3S)-lysyl hydroxylase JMJD7 from Drosophila melanogaster (Fruit fly).